Reading from the N-terminus, the 666-residue chain is Probable potassium transport system protein Kup (666 aa).

12 helical membrane-spanning segments follow: residues 53–73, 89–109, 144–164, 181–201, 212–232, 247–267, 291–311, 324–344, 381–401, 411–431, 441–461, and 463–483; these read FWAL…TSPL, VTPV…FIVV, LLLL…SMIT, PEFG…LFAV, AFAP…ALHI, AIHF…LVFL, WFCL…ALIL, LAPA…TVIA, IYLP…VLLF, YGIA…VVVW, AAAL…ANLL, and LLDG…LIWT.

It belongs to the HAK/KUP transporter (TC 2.A.72) family.

It localises to the cell inner membrane. It carries out the reaction K(+)(in) + H(+)(in) = K(+)(out) + H(+)(out). In terms of biological role, transport of potassium into the cell. Likely operates as a K(+):H(+) symporter. This Nitrobacter hamburgensis (strain DSM 10229 / NCIMB 13809 / X14) protein is Probable potassium transport system protein Kup.